A 2346-amino-acid polypeptide reads, in one-letter code: N-benzoylphenylalaninol synthetase apmA (2346 aa).

Residues 263 to 652 (ESAAQKSPDA…GRKDLQVKIR (390 aa)) form an adenylation 1 region. Positions 784–860 (MPTTTTEMTL…DMAKAMTSTR (77 aa)) constitute a Carrier 1 domain. At Ser-821 the chain carries O-(pantetheine 4'-phosphoryl)serine. A condensation region spans residues 896 to 1306 (QDAYPCSPLQ…ISPQDKENLL (411 aa)). The tract at residues 1330-1713 (SQPNAPAICA…GRKDTQVKIR (384 aa)) is adenylation 2. Positions 1842 to 1924 (SALRASEDKA…GLAAFIDAEL (83 aa)) constitute a Carrier 2 domain. Ser-1883 is subject to O-(pantetheine 4'-phosphoryl)serine. The interval 1960–2311 (VTGGTGFLGT…RNVQFLVEAG (352 aa)) is reductase (R) domain.

This sequence belongs to the NRP synthetase family.

The catalysed reaction is benzoate + L-phenylalanine + 2 AH2 + 2 ATP = N-benzoyl-L-phenylalaninol + 2 A + 2 AMP + 2 diphosphate + H(+). It functions in the pathway secondary metabolite biosynthesis. Its function is as follows. Nonribosomal peptide synthase; part of the gene cluster that mediates the biosynthesis of asperphenamate, a rare linear amino acid ester that exhibits antitumor activity towards a number of cell lines. The structure of asperphenamate contains two subunits, N-benzoylphenylalanine and N-benzoylphenylalaninol, which are connected by an inter-molecular ester bond. The first step of asperphenamate biosynthesis is the generation of N-benzoylphenylalaninol by the nonribosomal peptide synthase apmA. Using phenylalanine and benzoic acid as substrates, apmA catalyzes amide bond formation and tethers the intermediate into the NRPS chain. Then, the terminal R domain of apmA catalyzes the reduction reaction to get the shunt product N-benzoylphenylalaninol. Subsequently, the nonribosomal peptide synthase apmB activates the same substrates as does apmA (phenylalanine and benzoic acid) to produce N-benzoylphenylalanine before condensing N-benzoylphenylalanine and N-benzoylphenylalaninol to release asperphenamate. The sequence is that of N-benzoylphenylalaninol synthetase apmA from Penicillium brevicompactum.